A 609-amino-acid chain; its full sequence is Manganese lipoxygenase (609 aa).

A signal peptide spans 1–16; that stretch reads MRLLLSIAGLTTVVNA. Asn24, Asn115, Asn156, and Asn193 each carry an N-linked (GlcNAc...) asparagine glycan. The 493-residue stretch at 117 to 609 folds into the Lipoxygenase domain; the sequence is SLKAIQDHGG…PGVIPFYLSV (493 aa). Positions 289 and 294 each coordinate Mn(2+). Asn385 carries an N-linked (GlcNAc...) asparagine glycan. Mn(2+) is bound by residues His474 and Asn478. The N-linked (GlcNAc...) asparagine glycan is linked to Asn539. Mn(2+) is bound at residue Val609.

The protein belongs to the lipoxygenase family. Manganese lipoxygenase subfamily. The cofactor is Mn(2+). Post-translationally, N- and O-glycosylated.

Its subcellular location is the secreted. It catalyses the reaction (9Z,12Z)-octadecadienoate + O2 = (9S)-hydroperoxy-(10E,12Z)-octadecadienoate. The catalysed reaction is (9Z,12Z)-octadecadienoate + O2 = (11S)-hydroperoxy-(9Z,12Z)-octadecadienoate. The enzyme catalyses (9Z,12Z)-octadecadienoate + O2 = (13R)-hydroperoxy-(9Z,11E)-octadecadienoate. It carries out the reaction (9Z,12Z,15Z)-octadecatrienoate + O2 = (11R)-hydroperoxy-(9Z,12Z,15Z)-octadecatrienoate. Lipoxygenase that metabolizes linoleic and alpha-linolenic acids to 9-, 11- and 13-hydroperoxy fatty acids. Oxidizes linoleic acid to mainly 9S- and 13R-HPODE and alpha-linolenic acid to 11R-HPOTrE. The chain is Manganese lipoxygenase from Colletotrichum gloeosporioides (strain Cg-14) (Anthracnose fungus).